Here is a 293-residue protein sequence, read N- to C-terminus: Formamidopyrimidine-DNA glycosylase (293 aa).

Pro2 serves as the catalytic Schiff-base intermediate with DNA. The active-site Proton donor is the Glu3. Lys58 acts as the Proton donor; for beta-elimination activity in catalysis. 3 residues coordinate DNA: His104, Arg123, and Arg166. Residues 257-293 (QVYDREGDKCRTPACKGAVKRFTQNGRSTFWCPVCQT) form an FPG-type zinc finger. The active-site Proton donor; for delta-elimination activity is the Arg283.

It belongs to the FPG family. As to quaternary structure, monomer. Zn(2+) serves as cofactor.

It carries out the reaction Hydrolysis of DNA containing ring-opened 7-methylguanine residues, releasing 2,6-diamino-4-hydroxy-5-(N-methyl)formamidopyrimidine.. The catalysed reaction is 2'-deoxyribonucleotide-(2'-deoxyribose 5'-phosphate)-2'-deoxyribonucleotide-DNA = a 3'-end 2'-deoxyribonucleotide-(2,3-dehydro-2,3-deoxyribose 5'-phosphate)-DNA + a 5'-end 5'-phospho-2'-deoxyribonucleoside-DNA + H(+). Functionally, involved in base excision repair of DNA damaged by oxidation or by mutagenic agents. Acts as a DNA glycosylase that recognizes and removes damaged bases. Has a preference for oxidized purines, such as 7,8-dihydro-8-oxoguanine (8-oxoG). Has AP (apurinic/apyrimidinic) lyase activity and introduces nicks in the DNA strand. Cleaves the DNA backbone by beta-delta elimination to generate a single-strand break at the site of the removed base with both 3'- and 5'-phosphates. The chain is Formamidopyrimidine-DNA glycosylase from Nitrobacter winogradskyi (strain ATCC 25391 / DSM 10237 / CIP 104748 / NCIMB 11846 / Nb-255).